Reading from the N-terminus, the 188-residue chain is Elongation factor P (188 aa).

Lys34 is subject to N6-(3,6-diaminohexanoyl)-5-hydroxylysine.

It belongs to the elongation factor P family. Post-translationally, may be beta-lysylated on the epsilon-amino group of Lys-34 by the combined action of EpmA and EpmB, and then hydroxylated on the C5 position of the same residue by EpmC (if this protein is present). Lysylation is critical for the stimulatory effect of EF-P on peptide-bond formation. The lysylation moiety may extend toward the peptidyltransferase center and stabilize the terminal 3-CCA end of the tRNA. Hydroxylation of the C5 position on Lys-34 may allow additional potential stabilizing hydrogen-bond interactions with the P-tRNA.

It localises to the cytoplasm. The protein operates within protein biosynthesis; polypeptide chain elongation. Functionally, involved in peptide bond synthesis. Alleviates ribosome stalling that occurs when 3 or more consecutive Pro residues or the sequence PPG is present in a protein, possibly by augmenting the peptidyl transferase activity of the ribosome. Modification of Lys-34 is required for alleviation. The sequence is that of Elongation factor P from Xanthomonas oryzae pv. oryzae (strain MAFF 311018).